The chain runs to 525 residues: Packaging protein UL32 homolog (525 aa).

Over residues 1–12 (MAHKVTSANEPN) the composition is skewed to polar residues. The tract at residues 1–20 (MAHKVTSANEPNPLTGKRLS) is disordered. The Zn(2+) site is built by C95, C98, H173, C179, C255, C256, C357, C360, H427, C434, C473, and H510. Zinc finger regions lie at residues 95–179 (CRVC…ICRC), 255–510 (CCHL…LRIH), and 357–434 (CPLC…DPLC).

Belongs to the herpesviridae UL32 protein family.

Its subcellular location is the host cytoplasm. The protein localises to the host nucleus. In terms of biological role, plays a role in efficient localization of neo-synthesized capsids to nuclear replication compartments, thereby controlling cleavage and packaging of virus genomic DNA. This chain is Packaging protein UL32 homolog, found in Epstein-Barr virus (strain B95-8) (HHV-4).